Consider the following 178-residue polypeptide: Alkyl hydroperoxide reductase AhpD (178 aa).

Cys130 serves as the catalytic Proton donor. A disulfide bond links Cys130 and Cys133. Cys133 functions as the Cysteine sulfenic acid (-SOH) intermediate in the catalytic mechanism.

This sequence belongs to the AhpD family. In terms of assembly, homotrimer.

It carries out the reaction N(6)-[(R)-dihydrolipoyl]-L-lysyl-[lipoyl-carrier protein] + a hydroperoxide = N(6)-[(R)-lipoyl]-L-lysyl-[lipoyl-carrier protein] + an alcohol + H2O. In terms of biological role, antioxidant protein with alkyl hydroperoxidase activity. Required for the reduction of the AhpC active site cysteine residues and for the regeneration of the AhpC enzyme activity. The chain is Alkyl hydroperoxide reductase AhpD from Mycobacterium marinum (strain ATCC BAA-535 / M).